The sequence spans 501 residues: MTTAQAAESQNPYLEGFLAPVSTEVTATDLPVTGRIPEHLDGRYLRNGPNPVAEVDPATYHWFTGDAMVHGVALRDGKARWYRNRWVRTPAVCAALGEPISARPHPRTGIIEGGPNTNVLTHAGRTLALVEAGVVNYELTDELDTVGPCDFDGTLHGGYTAHPQRDPHTGELHAVSYSFARGHRVQYSVIGTDGHARRTVDIEVAGSPMMHSFSLTDNYVVIYDLPVTFDPMQVVPASVPRWLQRPARLVIQSVLGRVRIPDPIAALGNRMQGHSDRLPYAWNPSYPARVGVMPREGGNEDVRWFDIEPCYVYHPLNAYSECRNGAEVLVLDVVRYSRMFDRDRRGPGGDSRPSLDRWTINLATGAVTAECRDDRAQEFPRINETLVGGPHRFAYTVGIEGGFLVGAGAALSTPLYKQDCVTGSSTVASLDPDLLIGEMVFVPNPSARAEDDGILMGYGWHRGRDEGQLLLLDAQTLESIATVHLPQRVPMGFHGNWAPTT.

4 residues coordinate Fe cation: histidine 162, histidine 211, histidine 314, and histidine 494.

This sequence belongs to the carotenoid oxygenase family. The cofactor is Fe(2+).

Catalyzes the oxidative cleavage of several carotenoids and apocarotenoids in vitro. The polypeptide is Carotenoid cleavage oxygenase (Mycobacterium tuberculosis (strain CDC 1551 / Oshkosh)).